Reading from the N-terminus, the 228-residue chain is 7-cyano-7-deazaguanine synthase (228 aa).

9 to 19 (LSGGPDSTTVL) lines the ATP pocket. 4 residues coordinate Zn(2+): C193, C203, C206, and C209.

Belongs to the QueC family. Zn(2+) serves as cofactor.

The enzyme catalyses 7-carboxy-7-deazaguanine + NH4(+) + ATP = 7-cyano-7-deazaguanine + ADP + phosphate + H2O + H(+). It functions in the pathway purine metabolism; 7-cyano-7-deazaguanine biosynthesis. In terms of biological role, catalyzes the ATP-dependent conversion of 7-carboxy-7-deazaguanine (CDG) to 7-cyano-7-deazaguanine (preQ(0)). This chain is 7-cyano-7-deazaguanine synthase, found in Rickettsia peacockii (strain Rustic).